Consider the following 244-residue polypeptide: rRNA adenine N-6-methyltransferase (244 aa).

S-adenosyl-L-methionine is bound by residues Asn-11, Ile-13, Gly-38, Glu-59, Asp-84, and Asn-101.

Belongs to the class I-like SAM-binding methyltransferase superfamily. rRNA adenine N(6)-methyltransferase family.

It carries out the reaction adenosine(2085) in 23S rRNA + 2 S-adenosyl-L-methionine = N(6)-dimethyladenosine(2085) in 23S rRNA + 2 S-adenosyl-L-homocysteine + 2 H(+). In terms of biological role, this protein produces a dimethylation of the adenine residue at position 2085 in 23S rRNA, resulting in reduced affinity between ribosomes and macrolide-lincosamide-streptogramin B antibiotics. The chain is rRNA adenine N-6-methyltransferase (ermM) from Staphylococcus epidermidis.